Here is a 320-residue protein sequence, read N- to C-terminus: Phosphate acetyltransferase (320 aa).

This sequence belongs to the phosphate acetyltransferase and butyryltransferase family.

The protein resides in the cytoplasm. The catalysed reaction is acetyl-CoA + phosphate = acetyl phosphate + CoA. It functions in the pathway metabolic intermediate biosynthesis; acetyl-CoA biosynthesis; acetyl-CoA from acetate: step 2/2. The chain is Phosphate acetyltransferase (pta) from Mycoplasma genitalium (strain ATCC 33530 / DSM 19775 / NCTC 10195 / G37) (Mycoplasmoides genitalium).